The sequence spans 330 residues: Ketol-acid reductoisomerase (NADP(+)) (330 aa).

Residues 2–182 (VEIYYDDDAS…GGTRAGALRT (181 aa)) form the KARI N-terminal Rossmann domain. NADP(+)-binding positions include 25–28 (YGSQ), S51, and S53. The active site involves H108. Residue G134 coordinates NADP(+). In terms of domain architecture, KARI C-terminal knotted spans 183-328 (TFTEETETDL…AKLRPLMSWI (146 aa)). The Mg(2+) site is built by D191, E195, E227, and E231. Substrate is bound at residue S252.

This sequence belongs to the ketol-acid reductoisomerase family. It depends on Mg(2+) as a cofactor.

It carries out the reaction (2R)-2,3-dihydroxy-3-methylbutanoate + NADP(+) = (2S)-2-acetolactate + NADPH + H(+). The catalysed reaction is (2R,3R)-2,3-dihydroxy-3-methylpentanoate + NADP(+) = (S)-2-ethyl-2-hydroxy-3-oxobutanoate + NADPH + H(+). It participates in amino-acid biosynthesis; L-isoleucine biosynthesis; L-isoleucine from 2-oxobutanoate: step 2/4. The protein operates within amino-acid biosynthesis; L-valine biosynthesis; L-valine from pyruvate: step 2/4. Involved in the biosynthesis of branched-chain amino acids (BCAA). Catalyzes an alkyl-migration followed by a ketol-acid reduction of (S)-2-acetolactate (S2AL) to yield (R)-2,3-dihydroxy-isovalerate. In the isomerase reaction, S2AL is rearranged via a Mg-dependent methyl migration to produce 3-hydroxy-3-methyl-2-ketobutyrate (HMKB). In the reductase reaction, this 2-ketoacid undergoes a metal-dependent reduction by NADPH to yield (R)-2,3-dihydroxy-isovalerate. This is Ketol-acid reductoisomerase (NADP(+)) from Frankia alni (strain DSM 45986 / CECT 9034 / ACN14a).